Reading from the N-terminus, the 512-residue chain is Maturase K (512 aa).

It belongs to the intron maturase 2 family. MatK subfamily.

Its subcellular location is the plastid. The protein resides in the chloroplast. In terms of biological role, usually encoded in the trnK tRNA gene intron. Probably assists in splicing its own and other chloroplast group II introns. The chain is Maturase K from Oenothera biennis (German evening primrose).